We begin with the raw amino-acid sequence, 89 residues long: Small ribosomal subunit protein uS15 (89 aa).

The protein belongs to the universal ribosomal protein uS15 family. As to quaternary structure, part of the 30S ribosomal subunit. Forms a bridge to the 50S subunit in the 70S ribosome, contacting the 23S rRNA.

Functionally, one of the primary rRNA binding proteins, it binds directly to 16S rRNA where it helps nucleate assembly of the platform of the 30S subunit by binding and bridging several RNA helices of the 16S rRNA. In terms of biological role, forms an intersubunit bridge (bridge B4) with the 23S rRNA of the 50S subunit in the ribosome. The protein is Small ribosomal subunit protein uS15 of Geobacillus kaustophilus (strain HTA426).